A 665-amino-acid chain; its full sequence is Filensin (665 aa).

The head stretch occupies residues 1–40 (MYRRSYVFQTRKEQYEHADEASRAAEPERPADEGWAGATS). Ser5 bears the Phosphoserine mark. The IF rod domain occupies 40 to 320 (SLAALQGLGE…RIIEIEGNRL (281 aa)). Positions 41–75 (LAALQGLGERVAAHVQRARALEQRHAGLRRQLDAF) are coil 1A. At Ala42 the chain carries N-acetylalanine. The linker 1 stretch occupies residues 76–84 (QRLGELAGP). Positions 85–184 (EDALARQVES…RHKKNLLEVQ (100 aa)) are coil 1B. The interval 185-201 (TYISILQQIIHTTPPAS) is linker 12. A coil 2 region spans residues 202-320 (IVTSGMREEK…RIIEIEGNRL (119 aa)). The tail stretch occupies residues 321–665 (TSAFIETPIP…DKKKSGEKSS (345 aa)). Phosphoserine occurs at positions 341 and 420. Disordered regions lie at residues 410–439 (SKFE…QISK) and 506–614 (YDGQ…KGPP). Residue Gly434 is the site of N-myristoyl glycine attachment. Residue Ser513 is modified to Phosphoserine. The segment covering 556-571 (PEEKREGEERDEESRR) has biased composition (basic and acidic residues). Residue Ser665 is modified to Phosphoserine.

The protein belongs to the intermediate filament family. In terms of assembly, part of a complex required for lens intermediate filament formation composed of BFSP1, BFSP2 and CRYAA. Identified in a complex that contains VIM, EZR, AHNAK, BFSP1, BFSP2, ANK2, PLEC, PRX and spectrin. Found in a complex composed of PPL (via C-terminal linker domain), BFSP1 and BFSP2 in the retinal lens. Within the complex interacts with BFSP2. Interacts (via C-terminus) with MIP (via C-terminus) in aged lens fiber cells. In terms of processing, proteolytically cleaved during lens cell fiber differentiation with increased fragmentation as fiber cell age increases. Myristoylated at Gly-434 following proteolytic cleavage at Asp-433. Post-translationally, acetylated at Ala-42 following proteolytic cleavage at Leu-41. Expressed in the cortex and nucleus of the retina lens (at protein level).

Its subcellular location is the cell membrane. The protein resides in the cytoplasm. The protein localises to the cytoskeleton. It is found in the cell cortex. In terms of biological role, required for the correct formation of lens intermediate filaments as part of a complex composed of BFSP1, BFSP2 and CRYAA. Involved in altering the calcium regulation of MIP water permeability. In Homo sapiens (Human), this protein is Filensin (BFSP1).